Reading from the N-terminus, the 324-residue chain is Pseudouridine-5'-phosphate glycosidase (324 aa).

Residue Glu43 is the Proton donor of the active site. 2 residues coordinate substrate: Lys104 and Val124. Asp156 is a Mn(2+) binding site. 158 to 160 (SAD) is a substrate binding site. Residue Lys177 is the Nucleophile of the active site.

It belongs to the pseudouridine-5'-phosphate glycosidase family. Homotrimer. Mn(2+) is required as a cofactor.

It catalyses the reaction D-ribose 5-phosphate + uracil = psi-UMP + H2O. In terms of biological role, catalyzes the reversible cleavage of pseudouridine 5'-phosphate (PsiMP) to ribose 5-phosphate and uracil. Functions biologically in the cleavage direction, as part of a pseudouridine degradation pathway. This is Pseudouridine-5'-phosphate glycosidase from Salinispora tropica (strain ATCC BAA-916 / DSM 44818 / JCM 13857 / NBRC 105044 / CNB-440).